We begin with the raw amino-acid sequence, 294 residues long: MHPRFQTAFAQLADNLQSALAPILAGHHFPAMLTAEQVSTLKNTAGLDEDALAFALLPLAAACARTDLSHFNVGAIARGVSGNWYFGANMEFLGATMQQTVHAEQSAISHAWLRGEKGLAAVTVNYTPCGHCRQFMNELNSGLDLRIHLPGRAPHTLRDYLPDAFGPKDLEIKTLLMDEQDHGFTLTGDTLTQAAITAANKSHMPYSHSPSGVALECKDGRIFTGSYAENAAFNPTLPPLQGALNLLSLNGYDYADIQRAILAEKGDAALIQWDATAATLKALGCHNIDRVLLG.

CMP/dCMP-type deaminase domains follow at residues 48 to 168 (DEDA…FGPK) and 186 to 294 (LTGD…VLLG). A substrate-binding site is contributed by 89–91 (NME). His102 is a Zn(2+) binding site. Residue Glu104 is the Proton donor of the active site. Positions 129 and 132 each coordinate Zn(2+).

The protein belongs to the cytidine and deoxycytidylate deaminase family. In terms of assembly, homodimer. Requires Zn(2+) as cofactor.

The enzyme catalyses cytidine + H2O + H(+) = uridine + NH4(+). The catalysed reaction is 2'-deoxycytidine + H2O + H(+) = 2'-deoxyuridine + NH4(+). In terms of biological role, this enzyme scavenges exogenous and endogenous cytidine and 2'-deoxycytidine for UMP synthesis. The polypeptide is Cytidine deaminase (Salmonella choleraesuis (strain SC-B67)).